We begin with the raw amino-acid sequence, 202 residues long: Orotate phosphoribosyltransferase (202 aa).

113 to 121 lines the 5-phospho-alpha-D-ribose 1-diphosphate pocket; sequence EDIITTGGS. 2 residues coordinate orotate: threonine 117 and arginine 145.

It belongs to the purine/pyrimidine phosphoribosyltransferase family. PyrE subfamily. Homodimer. It depends on Mg(2+) as a cofactor.

The enzyme catalyses orotidine 5'-phosphate + diphosphate = orotate + 5-phospho-alpha-D-ribose 1-diphosphate. It functions in the pathway pyrimidine metabolism; UMP biosynthesis via de novo pathway; UMP from orotate: step 1/2. In terms of biological role, catalyzes the transfer of a ribosyl phosphate group from 5-phosphoribose 1-diphosphate to orotate, leading to the formation of orotidine monophosphate (OMP). This is Orotate phosphoribosyltransferase from Campylobacter lari (strain RM2100 / D67 / ATCC BAA-1060).